Here is a 328-residue protein sequence, read N- to C-terminus: Beta-ketoacyl-[acyl-carrier-protein] synthase III 2 (328 aa).

Residues cysteine 113 and histidine 255 contribute to the active site. An ACP-binding region spans residues 256–260 (QANAR). The active site involves asparagine 285.

The protein belongs to the thiolase-like superfamily. FabH family. As to quaternary structure, homodimer.

Its subcellular location is the cytoplasm. The enzyme catalyses malonyl-[ACP] + acetyl-CoA + H(+) = 3-oxobutanoyl-[ACP] + CO2 + CoA. The protein operates within lipid metabolism; fatty acid biosynthesis. In terms of biological role, catalyzes the condensation reaction of fatty acid synthesis by the addition to an acyl acceptor of two carbons from malonyl-ACP. Catalyzes the first condensation reaction which initiates fatty acid synthesis and may therefore play a role in governing the total rate of fatty acid production. Possesses both acetoacetyl-ACP synthase and acetyl transacylase activities. Its substrate specificity determines the biosynthesis of branched-chain and/or straight-chain of fatty acids. The sequence is that of Beta-ketoacyl-[acyl-carrier-protein] synthase III 2 from Lactiplantibacillus plantarum (strain ATCC BAA-793 / NCIMB 8826 / WCFS1) (Lactobacillus plantarum).